A 114-amino-acid polypeptide reads, in one-letter code: Large ribosomal subunit protein uL22 (114 aa).

The protein belongs to the universal ribosomal protein uL22 family. As to quaternary structure, part of the 50S ribosomal subunit.

Functionally, this protein binds specifically to 23S rRNA; its binding is stimulated by other ribosomal proteins, e.g. L4, L17, and L20. It is important during the early stages of 50S assembly. It makes multiple contacts with different domains of the 23S rRNA in the assembled 50S subunit and ribosome. In terms of biological role, the globular domain of the protein is located near the polypeptide exit tunnel on the outside of the subunit, while an extended beta-hairpin is found that lines the wall of the exit tunnel in the center of the 70S ribosome. This chain is Large ribosomal subunit protein uL22, found in Aeromonas hydrophila subsp. hydrophila (strain ATCC 7966 / DSM 30187 / BCRC 13018 / CCUG 14551 / JCM 1027 / KCTC 2358 / NCIMB 9240 / NCTC 8049).